We begin with the raw amino-acid sequence, 825 residues long: Breast cancer anti-estrogen resistance protein 3 homolog (825 aa).

N-acetylalanine is present on Ala-2. A phosphoserine mark is found at Ser-32, Ser-78, Ser-83, Ser-182, and Ser-290. Residues 40–84 form a disordered region; that stretch reads EAYPDVSIHGTLPRKKKGPPPIRSCDSASHMGTLPHSKSPRQSSP. In terms of domain architecture, SH2 spans 154-253; the sequence is WYHGRIPRQV…QSGAIIFQPI (100 aa). The disordered stretch occupies residues 300 to 320; that stretch reads DHSLPRGNLLRNKDKSGSQPA. An N6-methyllysine modification is found at Lys-334. Ser-358, Ser-363, and Ser-375 each carry phosphoserine. Position 442 is an omega-N-methylarginine (Arg-442). Position 471 is a phosphoserine (Ser-471). Positions 548-818 constitute a Ras-GEF domain; the sequence is DARVIAQHML…TALSRKLEPP (271 aa). A mediates the interaction with BCAR1/p130CAS region spans residues 744–748; that stretch reads LATAR.

In terms of assembly, part of a complex comprised of PTPRA, BCAR1, BCAR3 and SRC; the formation of the complex is dependent on integrin mediated-tyrosine phosphorylation of PTPRA. Within the complex, interacts (via SH2 domain) with PTPRA (when phosphorylated on 'Tyr-792'). Interacts (via Ras-GEF domain) with BCAR1. Interacts (via Ras-GEF domain) with NEDD9. Interacts with PTK2/FAK1. Interacts with PTPN1. Interacts (via SH2 domain) with EGFR (when tyrosine-phosphorylated). Phosphorylated on tyrosine residues.

It is found in the cytoplasm. It localises to the cell junction. Its subcellular location is the focal adhesion. Functionally, acts as an adapter protein downstream of several growth factor receptors to promote cell proliferation, migration, and redistribution of actin fibers. Specifically involved in INS/insulin signaling pathway by mediating MAPK1/ERK2-MAPK3/ERK1 activation and DNA synthesis. Promotes insulin-mediated membrane ruffling. In response to vasoconstrictor peptide EDN1, involved in the activation of RAP1 downstream of PTK2B via interaction with phosphorylated BCAR1. Inhibits cell migration and invasion via regulation of TGFB-mediated matrix digestion, actin filament rearrangement, and inhibition of invadopodia activity. May inhibit TGFB/SMAD signaling, via facilitating BCAR1 and SMAD2 and/or SMAD3 interaction. Regulates EGF-induced DNA synthesis. Required for the maintenance of ocular lens morphology and structural integrity, potentially via regulation of focal adhesion complex signaling. Acts upstream of PTPRA to regulate the localization of BCAR1 and PTPRA to focal adhesions, via regulation of SRC-mediated phosphorylation of PTPRA. Positively regulates integrin-induced tyrosine phosphorylation of BCAR1. Acts as a guanine nucleotide exchange factor (GEF) for small GTPases RALA, RAP1A and RRAS. However, in a contrasting study, lacks GEF activity towards RAP1. This Rattus norvegicus (Rat) protein is Breast cancer anti-estrogen resistance protein 3 homolog.